An 862-amino-acid polypeptide reads, in one-letter code: Semaphorin-4D (862 aa).

The N-terminal stretch at 1–21 (MRMCTPIRGLLMALAVMFGTA) is a signal peptide. The Sema domain occupies 22–500 (MAFAPIPRIT…SNSGVVQAPL (479 aa)). Topologically, residues 22–734 (MAFAPIPRIT…TMYLKSSDNR (713 aa)) are extracellular. N-linked (GlcNAc...) asparagine glycosylation is found at Asn49 and Asn77. 2 cysteine pairs are disulfide-bonded: Cys97-Cys108 and Cys126-Cys135. 2 N-linked (GlcNAc...) asparagine glycosylation sites follow: Asn139 and Asn191. Intrachain disulfides connect Cys257–Cys370 and Cys281–Cys326. 3 N-linked (GlcNAc...) asparagine glycosylation sites follow: Asn329, Asn379, and Asn419. Residues 502–551 (FCGKHGTCEDCVLARDPYCAWSPPTATCVALHQTESPSRGLIQEMSGDAS) form the PSI domain. Cystine bridges form between Cys503–Cys520, Cys509–Cys553, Cys512–Cys529, and Cys576–Cys624. In terms of domain architecture, Ig-like C2-type spans 554–636 (PDKSKGSYRQ…EERVKNKTVF (83 aa)). Residues Asn613 and Asn632 are each glycosylated (N-linked (GlcNAc...) asparagine). A helical membrane pass occupies residues 735-755 (LLMSLFLFFFVLFLCLFFYNC). Residues 756-862 (YKGYLPRQCL…KFADSDADGD (107 aa)) are Cytoplasmic-facing. Residues 794–837 (VEPGSFSQQNGEHPKPALDTGYETEQDTITSKVPTDREDSQRID) are disordered. Positions 827 to 837 (PTDREDSQRID) are enriched in basic and acidic residues. Ser833 carries the phosphoserine modification.

This sequence belongs to the semaphorin family. Homodimer. Interacts with PLXNB2. Interacts with PLXNB1. Strongly expressed in skeletal muscle, peripheral blood lymphocytes, spleen, and thymus and also expressed at lower levels in testes, brain, kidney, small intestine, prostate, heart, placenta, lung and pancreas, but not in colon and liver.

The protein localises to the cell membrane. In terms of biological role, cell surface receptor for PLXNB1 and PLXNB2 that plays an important role in cell-cell signaling. Regulates GABAergic synapse development. Promotes the development of inhibitory synapses in a PLXNB1-dependent manner. Modulates the complexity and arborization of developing neurites in hippocampal neurons by activating PLXNB1 and interaction with PLXNB1 mediates activation of RHOA. Promotes the migration of cerebellar granule cells. Plays a role in the immune system; induces B-cells to aggregate and improves their viability (in vitro). Induces endothelial cell migration through the activation of PTK2B/PYK2, SRC, and the phosphatidylinositol 3-kinase-AKT pathway. The polypeptide is Semaphorin-4D (SEMA4D) (Homo sapiens (Human)).